Here is a 277-residue protein sequence, read N- to C-terminus: Inhibition of morphological differentiation protein (277 aa).

Mg(2+) contacts are provided by aspartate 18, aspartate 20, and aspartate 192.

The protein belongs to the HAD-like hydrolase superfamily. SerB family.

The protein is Inhibition of morphological differentiation protein of Streptomyces azureus.